We begin with the raw amino-acid sequence, 547 residues long: Hydroxylamine reductase (547 aa).

[4Fe-4S] cluster is bound by residues cysteine 5, cysteine 8, cysteine 17, and cysteine 23. Residues histidine 242, glutamate 266, cysteine 310, cysteine 401, cysteine 429, cysteine 454, glutamate 489, and lysine 491 each coordinate hybrid [4Fe-2O-2S] cluster. At cysteine 401 the chain carries Cysteine persulfide.

Belongs to the HCP family. It depends on [4Fe-4S] cluster as a cofactor. Hybrid [4Fe-2O-2S] cluster serves as cofactor.

The protein resides in the cytoplasm. It catalyses the reaction A + NH4(+) + H2O = hydroxylamine + AH2 + H(+). Catalyzes the reduction of hydroxylamine to form NH(3) and H(2)O. This Thermoanaerobacter pseudethanolicus (strain ATCC 33223 / 39E) (Clostridium thermohydrosulfuricum) protein is Hydroxylamine reductase.